We begin with the raw amino-acid sequence, 330 residues long: Ornithine carbamoyltransferase (330 aa).

Carbamoyl phosphate contacts are provided by residues 57–60 (STRT), Q84, R108, and 135–138 (HPTQ). L-ornithine-binding positions include N168, D232, and 236–237 (SM). Carbamoyl phosphate-binding positions include 273–274 (CL) and R318.

Belongs to the aspartate/ornithine carbamoyltransferase superfamily. OTCase family.

The protein localises to the cytoplasm. The catalysed reaction is carbamoyl phosphate + L-ornithine = L-citrulline + phosphate + H(+). It participates in amino-acid biosynthesis; L-arginine biosynthesis; L-arginine from L-ornithine and carbamoyl phosphate: step 1/3. Reversibly catalyzes the transfer of the carbamoyl group from carbamoyl phosphate (CP) to the N(epsilon) atom of ornithine (ORN) to produce L-citrulline. The protein is Ornithine carbamoyltransferase of Alkaliphilus metalliredigens (strain QYMF).